Reading from the N-terminus, the 689-residue chain is Glycine--tRNA ligase beta subunit (689 aa).

It belongs to the class-II aminoacyl-tRNA synthetase family. Tetramer of two alpha and two beta subunits.

The protein localises to the cytoplasm. It catalyses the reaction tRNA(Gly) + glycine + ATP = glycyl-tRNA(Gly) + AMP + diphosphate. This is Glycine--tRNA ligase beta subunit from Lacticaseibacillus paracasei (strain ATCC 334 / BCRC 17002 / CCUG 31169 / CIP 107868 / KCTC 3260 / NRRL B-441) (Lactobacillus paracasei).